The sequence spans 700 residues: mRNA cap guanine-N(7) methyltransferase (700 aa).

Basic and acidic residues-rich tracts occupy residues 1-10 (MVYDPIRDCD) and 52-67 (EPPR…ESHR). 2 disordered regions span residues 1 to 263 (MVYD…SVLR) and 277 to 392 (AHAN…ERNK). Positions 113–128 (RSPSMSLSPRSQNQSL) are enriched in polar residues. Composition is skewed to low complexity over residues 129–144 (PYPS…SAHP) and 220–241 (PQPT…TPHH). The mRNA cap 0 methyltransferase domain maps to 429–700 (SPIIGLKKFN…LYMGFAFEKM (272 aa)). 438-439 (NN) contacts mRNA. S-adenosyl-L-methionine-binding residues include Lys442, Gly461, Asp483, Asp512, Gln538, and Tyr543.

This sequence belongs to the class I-like SAM-binding methyltransferase superfamily. mRNA cap 0 methyltransferase family.

It is found in the nucleus. The enzyme catalyses a 5'-end (5'-triphosphoguanosine)-ribonucleoside in mRNA + S-adenosyl-L-methionine = a 5'-end (N(7)-methyl 5'-triphosphoguanosine)-ribonucleoside in mRNA + S-adenosyl-L-homocysteine. Functionally, responsible for methylating the 5'-cap structure of mRNAs. This Cryptococcus neoformans var. neoformans serotype D (strain B-3501A) (Filobasidiella neoformans) protein is mRNA cap guanine-N(7) methyltransferase (ABD1).